The primary structure comprises 216 residues: Ribosomal RNA small subunit methyltransferase G (216 aa).

Residues glycine 81, leucine 86, 132 to 133 (VE), and arginine 147 contribute to the S-adenosyl-L-methionine site.

It belongs to the methyltransferase superfamily. RNA methyltransferase RsmG family.

It is found in the cytoplasm. It catalyses the reaction guanosine(527) in 16S rRNA + S-adenosyl-L-methionine = N(7)-methylguanosine(527) in 16S rRNA + S-adenosyl-L-homocysteine. Functionally, specifically methylates the N7 position of guanine in position 527 of 16S rRNA. In Hydrogenovibrio crunogenus (strain DSM 25203 / XCL-2) (Thiomicrospira crunogena), this protein is Ribosomal RNA small subunit methyltransferase G.